The primary structure comprises 4576 residues: Mucin-2 (4576 aa).

Residues 1–20 (MGLPLARLVAACLVLALAKG) form the signal peptide. Position 21 is a phosphoserine (Ser-21). Positions 32–205 (HVCSTWGDFH…KINKPEVQCE (174 aa)) constitute a VWFD 1 domain. Intrachain disulfides connect Cys-34–Cys-166, Cys-56–Cys-204, Cys-64–Cys-163, Cys-216–Cys-253, Cys-223–Cys-248, Cys-235–Cys-273, Cys-255–Cys-261, Cys-263–Cys-289, Cys-293–Cys-327, Cys-306–Cys-319, Cys-310–Cys-349, Cys-329–Cys-343, Cys-351–Cys-373, Cys-368–Cys-385, Cys-371–Cys-380, Cys-389–Cys-526, Cys-411–Cys-561, Cys-433–Cys-441, Cys-572–Cys-617, Cys-586–Cys-612, Cys-599–Cys-637, Cys-619–Cys-625, Cys-627–Cys-652, Cys-659–Cys-696, Cys-672–Cys-686, Cys-676–Cys-716, Cys-698–Cys-710, Cys-718–Cys-740, and Cys-738–Cys-747. Asp-46 lines the Ca(2+) pocket. Residues Met-143 and Met-151 each contribute to the Cu(+) site. Glu-153 serves as a coordination point for Cu(2+). Asn-160 carries an N-linked (GlcNAc...) asparagine glycan. Residues Asp-168, Asn-170, and Glu-177 each coordinate Ca(2+). Residue His-275 coordinates Cu(2+). Residues 293-349 (CPNNMVYLESSSPCVDTCSHLEVSSLCEEHYMDGCFCPEGTVYDDITGSGCIPVSQC) form the TIL domain. His-322 contacts Cu(2+). Residue Met-324 participates in Cu(+) binding. In terms of domain architecture, VWFD 2 spans 387-562 (ETCALEGGSH…NTWKAQSSCH (176 aa)). Asp-401 provides a ligand contact to Ca(2+). N-linked (GlcNAc...) asparagine glycosylation occurs at Asn-421. Asn-528, Asn-530, Leu-532, Asp-535, and Asp-536 together coordinate Ca(2+). The N-linked (GlcNAc...) asparagine glycan is linked to Asn-668. Asn-768 carries an N-linked (GlcNAc...) asparagine glycan. 21 disulfide bridges follow: Cys-782-Cys-818, Cys-800-Cys-812, Cys-820-Cys-843, Cys-837-Cys-855, Cys-841-Cys-850, Cys-859-Cys-990, Cys-881-Cys-1025, Cys-890-Cys-987, Cys-907-Cys-914, Cys-1035-Cys-1078, Cys-1049-Cys-1073, Cys-1060-Cys-1100, Cys-1080-Cys-1088, Cys-1090-Cys-1115, Cys-1106-Cys-1135, Cys-1119-Cys-1161, Cys-1143-Cys-1185, Cys-1165-Cys-1179, Cys-1187-Cys-1211, Cys-1206-Cys-1236, and Cys-1209-Cys-1219. Asn-838 is a glycosylation site (N-linked (GlcNAc...) asparagine). Residues 857–1026 (STCSIYGSGH…NSWKEASTCP (170 aa)) form the VWFD 3 domain. Asp-871 provides a ligand contact to Ca(2+). Residue Asn-893 is glycosylated (N-linked (GlcNAc...) asparagine). Ca(2+)-binding residues include Asn-992, Asp-994, Asn-999, and Asp-1000. 2 N-linked (GlcNAc...) asparagine glycosylation sites follow: Asn-1137 and Asn-1152. N-linked (GlcNAc...) asparagine glycans are attached at residues Asn-1213, Asn-1228, and Asn-1244. O-linked (GalNAc) threonine glycosylation is found at Thr-1265, Thr-1268, Thr-1269, Thr-1281, and Thr-1292. Ca(2+) is bound by residues Asn-1305, His-1308, Gly-1315, Asp-1316, and Glu-1318. N-linked (GlcNAc...) asparagine glycosylation occurs at Asn-1352. Ca(2+) contacts are provided by Asp-1375 and Tyr-1376. 5 repeat units span residues 1395–1415 (SPTT…PTTL), 1416–1427 (PTSSPVTSSATL), 1428–1437 (PTTSSITSTI), 1438–1453 (SPTT…SPTT), and 1454–1460 (SPTTSPT). The disordered stretch occupies residues 1395–2866 (SPTTSTTTLS…PTTSSTFTTP (1472 aa)). The 7B repeat unit spans residues 1478–1497 (PSTTSPTTPSTTPSTTSPTT). The stretch at 1498–1510 (PSTTSPTTPTSTS) is one 8A repeat. One copy of the 9B repeat lies at 1530 to 1556 (SPTTSPTTPSTTSPTISTTTSTISPTT). One copy of the 10A repeat lies at 1557-1572 (PSTTSPNTPSTTSSTI). The stretch at 1573–1588 (PSTTSPTTPSTTSPTI) is one 10B repeat. An 11A repeat occupies 1589-1607 (STTTSTTSPTTPSTTSPTT). An 11B repeat occupies 1608–1634 (PSTTSPTTPSTTSPTISTTTLTTSPTT). Repeat copies occupy residues 1635–1642 (PSTTSPTT) and 1665–1681 (ISPT…LSTT). Residues Asn-2529 and Asn-2910 are each glycosylated (N-linked (GlcNAc...) asparagine). Low complexity-rich tracts occupy residues 2975 to 3623 (PSST…GSTP) and 3631 to 3706 (PGPT…TSPS). Residues 2975–3706 (PSSTTTETPT…SSTSPITSPS (732 aa)) are disordered. 3 N-linked (GlcNAc...) asparagine glycosylation sites follow: Asn-3734, Asn-3745, and Asn-3756. Positions 3764–3774 (STPTPSTPTPT) are enriched in pro residues. The segment at 3764–3806 (STPTPSTPTPTPSQTTTPSTTSSKSTPSTPQSTSPKSTLSTPT) is disordered. The span at 3775–3806 (PSQTTTPSTTSSKSTPSTPQSTSPKSTLSTPT) shows a compositional bias: low complexity. 3 N-linked (GlcNAc...) asparagine glycosylation sites follow: Asn-3823, Asn-3830, and Asn-3903. The region spanning 3880-4063 (CYCTGWGDPH…VNDPSKPHCP (184 aa)) is the VWFD 4 domain. Intrachain disulfides connect Cys-3882–Cys-4023, Cys-3904–Cys-4062, and Cys-3928–Cys-3936. N-linked (GlcNAc...) asparagine glycans are attached at residues Asn-3991, Asn-4017, Asn-4028, Asn-4083, Asn-4149, Asn-4183, Asn-4254, Asn-4277, Asn-4351, Asn-4366, Asn-4434, Asn-4465, and Asn-4488. VWFC domains are found at residues 4213–4282 (CVGP…TSCK) and 4320–4387 (GVCV…KKCQ). Disulfide bonds link Cys-4471–Cys-4518, Cys-4485–Cys-4532, Cys-4494–Cys-4548, and Cys-4498–Cys-4550. Positions 4471-4556 (CSAVSVMKEI…SCLCQDTVCG (86 aa)) constitute a CTCK domain.

Homomultimer; disulfide-linked. The N- and C-terminus mediate their assembly into higher order structures to form filaments. The CTCK domains of two polypeptides associate in the endoplasmic reticulum to generate intermolecularly disulfide-bonded dimers. These dimers progress to the Golgi apparatus, which is a more acidic environment than the endoplasmic reticulum. Under acidic conditions, the N-termini form non-covalent intermolecular interactions that juxtapose assemblies of the third VWD domain (VWD3) from different CTCK-linked dimers. The VWD3 assemblies then become disulfide bonded to one another to produce long, disulfide-linked polymers that remain highly compact until secretion. Interacts with FCGBP. Interacts with AGR2; disulfide-linked. Post-translationally, O-glycosylated. O-glycosylation is required for mucin assembly. Goblet cells synthesize two forms of mucin that differ in branched chain O-glycosylation and the site of production in the colon. In terms of processing, may undergo proteolytic cleavage in the outer mucus layer of the colon, contributing to the expanded volume and loose nature of this layer which allows for bacterial colonization in contrast to the inner mucus layer which is dense and devoid of bacteria. At low pH of 6 and under, undergoes autocatalytic cleavage in vitro in the N-terminal region of the fourth VWD domain. It is likely that this also occurs in vivo and is triggered by the low pH of the late secretory pathway. In terms of tissue distribution, highly expressed in goblet cells of the colon with lower levels in the small intestine and no expression in the stomach (at protein level).

Its subcellular location is the secreted. Coats the epithelia of the intestines and other mucus membrane-containing organs to provide a protective, lubricating barrier against particles and infectious agents at mucosal surfaces. Major constituent of the colon mucus, which is mainly formed by large polymeric networks of MUC2 secreted by goblet cells that cover the exposed surfaces of intestine. MUC2 networks form hydrogels that guard the underlying epithelium from pathogens and other hazardous matter entering from the outside world, while permitting nutrient absorption and gas exchange. Acts as a divalent copper chaperone that protects intestinal cells from copper toxicity and facilitates nutritional copper unptake into cells. Binds both Cu(2+) and its reduced form, Cu(1+), at two juxtaposed binding sites: Cu(2+), once reduced to Cu(1+) by vitamin C (ascorbate) or other dietary antioxidants, transits to the other binding site. MUC2-bound Cu(1+) is protected from oxidation in aerobic environments, and can be released for nutritional delivery to cells. Mucin gels store antimicrobial molecules that participate in innate immunity. Mucin glycoproteins also house and feed the microbiome, lubricate tissue surfaces, and may facilitate the removal of contaminants and waste products from the body. Goblet cells synthesize two forms of MUC2 mucin that differ in branched chain O-glycosylation and the site of production in the colon: a (1) 'thick' mucus that wraps the microbiota to form fecal pellets is produced in the proximal, ascending colon. 'Thick' mucus transits along the descending colon and is lubricated by a (2) 'thin' MUC2 mucus produced in the distal colon which adheres to the 'thick' mucus. This chain is Mucin-2, found in Mus musculus (Mouse).